A 542-amino-acid chain; its full sequence is CTP synthase (542 aa).

The amidoligase domain stretch occupies residues 1 to 265 (MTRYIFVTGG…DDFVVERFGL (265 aa)). Residue Ser13 participates in CTP binding. A UTP-binding site is contributed by Ser13. ATP is bound by residues 14-19 (SLGKGI) and Asp71. Asp71 and Glu139 together coordinate Mg(2+). CTP is bound by residues 146–148 (DIE), 186–191 (KTKPTQ), and Lys222. UTP-binding positions include 186-191 (KTKPTQ) and Lys222. The Glutamine amidotransferase type-1 domain maps to 290-541 (TIAMVGKYME…VKAALAQKNK (252 aa)). Gly351 provides a ligand contact to L-glutamine. Cys378 (nucleophile; for glutamine hydrolysis) is an active-site residue. L-glutamine-binding positions include 379–382 (LGMQ), Glu402, and Arg469. Catalysis depends on residues His514 and Glu516.

It belongs to the CTP synthase family. In terms of assembly, homotetramer.

The enzyme catalyses UTP + L-glutamine + ATP + H2O = CTP + L-glutamate + ADP + phosphate + 2 H(+). The catalysed reaction is L-glutamine + H2O = L-glutamate + NH4(+). It carries out the reaction UTP + NH4(+) + ATP = CTP + ADP + phosphate + 2 H(+). It functions in the pathway pyrimidine metabolism; CTP biosynthesis via de novo pathway; CTP from UDP: step 2/2. With respect to regulation, allosterically activated by GTP, when glutamine is the substrate; GTP has no effect on the reaction when ammonia is the substrate. The allosteric effector GTP functions by stabilizing the protein conformation that binds the tetrahedral intermediate(s) formed during glutamine hydrolysis. Inhibited by the product CTP, via allosteric rather than competitive inhibition. Its function is as follows. Catalyzes the ATP-dependent amination of UTP to CTP with either L-glutamine or ammonia as the source of nitrogen. Regulates intracellular CTP levels through interactions with the four ribonucleotide triphosphates. This Pseudomonas putida (strain ATCC 700007 / DSM 6899 / JCM 31910 / BCRC 17059 / LMG 24140 / F1) protein is CTP synthase.